A 266-amino-acid chain; its full sequence is Glutaconate CoA-transferase subunit B (266 aa).

Glu-54 is a catalytic residue.

It belongs to the 3-oxoacid CoA-transferase subunit B family. As to quaternary structure, heterooctamer of four A and four B subunits.

It is found in the cytoplasm. It catalyses the reaction trans-glutaconate + acetyl-CoA = (2E)-glutaconyl-CoA + acetate. The protein operates within amino-acid degradation; L-glutamate degradation via hydroxyglutarate pathway; crotonoyl-CoA from L-glutamate: step 3/5. In terms of biological role, catalyzes the transfer of the CoA moiety from acetyl-CoA to (R)-2-hydroxyglutarate and related compounds like glutaconate. The sequence is that of Glutaconate CoA-transferase subunit B (gctB) from Acidaminococcus fermentans (strain ATCC 25085 / DSM 20731 / CCUG 9996 / CIP 106432 / VR4).